Here is a 140-residue protein sequence, read N- to C-terminus: Holo-[acyl-carrier-protein] synthase (140 aa).

Residues Asp7 and Glu58 each contribute to the Mg(2+) site.

Belongs to the P-Pant transferase superfamily. AcpS family. Mg(2+) serves as cofactor.

It localises to the cytoplasm. The enzyme catalyses apo-[ACP] + CoA = holo-[ACP] + adenosine 3',5'-bisphosphate + H(+). Its function is as follows. Transfers the 4'-phosphopantetheine moiety from coenzyme A to a Ser of acyl-carrier-protein. The polypeptide is Holo-[acyl-carrier-protein] synthase (Chloroflexus aggregans (strain MD-66 / DSM 9485)).